The chain runs to 271 residues: N-acetyltransferase ECO1 (271 aa).

The segment at Met1–Ser38 is disordered. The span at Ser20 to Pro31 shows a compositional bias: low complexity. The CCHH-type zinc finger occupies Thr80 to His104.

This sequence belongs to the acetyltransferase family. ECO subfamily.

The protein resides in the nucleus. Functionally, probable acetyltransferase required for the establishment of sister chromatid cohesion and couple the processes of cohesion and DNA replication to ensure that only sister chromatids become paired together. In contrast to the structural cohesins, the deposition and establishment factors are required only during S phase. Acts by acetylating the cohesin complex component SMC3. The sequence is that of N-acetyltransferase ECO1 (ECO1) from Yarrowia lipolytica (strain CLIB 122 / E 150) (Yeast).